Reading from the N-terminus, the 273-residue chain is MIPVKVENNTSLDQVQDALNCVGYAVVEDVLDEASLAATRDRMYRVQERILTEIGKERLARAGELGVLRLMMKYDPHFFTFLEIPEVLSIVDRVLSETAILHLQNGFILPSFPPFSTPDVFQNAFHQDFPRVLSGYIASVNIMFAIDPFTRDTGATLVVPGSHQRIEKPDHTYLARNAVPVQCAAGSLFVFDSTLWHAAGRNTSGKDRLAINHQFTRSFFKQQIDYVRALGDAVVLEQPARTQQLLGWYSRVVTNLDEYYQPPDKRLYRKGQG.

The protein belongs to the PhyH family.

This is an uncharacterized protein from Mycobacterium tuberculosis (strain ATCC 25618 / H37Rv).